The chain runs to 458 residues: ATP synthase subunit beta (458 aa).

An ATP-binding site is contributed by 148-155 (GGAGVGKT).

It belongs to the ATPase alpha/beta chains family. In terms of assembly, F-type ATPases have 2 components, CF(1) - the catalytic core - and CF(0) - the membrane proton channel. CF(1) has five subunits: alpha(3), beta(3), gamma(1), delta(1), epsilon(1). CF(0) has three main subunits: a(1), b(2) and c(9-12). The alpha and beta chains form an alternating ring which encloses part of the gamma chain. CF(1) is attached to CF(0) by a central stalk formed by the gamma and epsilon chains, while a peripheral stalk is formed by the delta and b chains.

The protein localises to the cell inner membrane. The catalysed reaction is ATP + H2O + 4 H(+)(in) = ADP + phosphate + 5 H(+)(out). Produces ATP from ADP in the presence of a proton gradient across the membrane. The catalytic sites are hosted primarily by the beta subunits. This chain is ATP synthase subunit beta, found in Pseudomonas aeruginosa (strain LESB58).